The primary structure comprises 202 residues: Transmembrane 4 L6 family member 1 (202 aa).

Over 1 to 9 (MCSSKCTRY) the chain is Cytoplasmic. A helical membrane pass occupies residues 10–30 (IGHSLVVFAVLCIVANILLYF). The Extracellular segment spans residues 31–49 (PNGETKYAYEDHLSRFVWF). The helical transmembrane segment at 50 to 70 (FAGIVGGGLLILLPAFVFLGL) threads the bilayer. At 71–93 (EGEDCCGCWSCENYGKRCTMLSS) the chain is on the cytoplasmic side. A helical membrane pass occupies residues 94–114 (IMAALIGIAGSGYCVIVAALG). The Extracellular portion of the chain corresponds to 115–161 (LAEGPKCGDSHGMWNYTFANTDGQYLLDPTTWSKCHEPNNIVEWNVT). Residues asparagine 129 and asparagine 159 are each glycosylated (N-linked (GlcNAc...) asparagine). A helical transmembrane segment spans residues 162–182 (LFSILLALGGLEFILCLIQVI). Over 183–202 (NGVLEGMCSYCCSHQQQYDC) the chain is Cytoplasmic.

This sequence belongs to the L6 tetraspanin family. In terms of assembly, present in high molecular weight complexes in tumor cells. Interacts with SDCBP2.

It is found in the membrane. The polypeptide is Transmembrane 4 L6 family member 1 (TM4SF1) (Mesocricetus auratus (Golden hamster)).